The primary structure comprises 98 residues: UPF0213 protein in ldhD 5'region (98 aa).

Positions 7-84 (NGFYFYVLWC…KKQSRKEKLK (78 aa)) constitute a GIY-YIG domain.

Belongs to the UPF0213 family.

The protein is UPF0213 protein in ldhD 5'region of Pediococcus acidilactici.